A 567-amino-acid chain; its full sequence is MAHISRTAYANMFGPTTGDRLRLADTELFLEVEKDFTTYGEEVKFGGGKVIRDGMGQSQVVNSECVDVVITNALILDHWGIVKADIGIKDGRIFGIGKAGNPDVQPNVDIVVGPATEVVAGEGKIITAGGVDTHIHFICPQQAEEGLTSGVTTFIGGGTGPVAGTNATTVTPGIWNIHRMLEAVDDLPINVGLFGKGCVSKPEALREQIEAGAMGLKIHEDWGATPAAIHNCLNVADEMDIQIAIHSDTLNEGGFYEETVKAIGDRVIHVFHTEGAGGGHAPDVIKSVGEPNILPASTNPTMPYTINTVDEHLDMLMVCHHLDPSIPEDVAFAESRIRRETIAAEDILHDMGAISVMSSDSQAMGRVGEVIIRTWQCANKMKLQRGILEGDNEHNDNERIKRYVAKYTINPAIAHGISHEVGSVEKGKLADLVLWNPAFFGVKPALVMKSGLVAYAPMGDINAAIPTPQPVHYRPMFACYGKAKFKSSMIFLSQASIEAGVPEKLNLQSQIGEVKGCRNISKKSMIHNSYTPNIELDSQTYEVKADGVPLVCEPATELPMAQRYFLF.

In terms of domain architecture, Urease spans 129–567 (GGVDTHIHFI…LPMAQRYFLF (439 aa)). Residues histidine 134, histidine 136, and lysine 217 each contribute to the Ni(2+) site. Lysine 217 bears the N6-carboxylysine mark. Histidine 219 serves as a coordination point for substrate. Ni(2+) contacts are provided by histidine 246 and histidine 272. The active-site Proton donor is the histidine 320. Residue aspartate 360 participates in Ni(2+) binding.

This sequence belongs to the metallo-dependent hydrolases superfamily. Urease alpha subunit family. In terms of assembly, heterotrimer of UreA (gamma), UreB (beta) and UreC (alpha) subunits. Three heterotrimers associate to form the active enzyme. Requires Ni cation as cofactor. In terms of processing, carboxylation allows a single lysine to coordinate two nickel ions.

The protein resides in the cytoplasm. It carries out the reaction urea + 2 H2O + H(+) = hydrogencarbonate + 2 NH4(+). It participates in nitrogen metabolism; urea degradation; CO(2) and NH(3) from urea (urease route): step 1/1. The protein is Urease subunit alpha of Aliivibrio fischeri (strain MJ11) (Vibrio fischeri).